A 406-amino-acid polypeptide reads, in one-letter code: Homocitrate synthase AksA (406 aa).

Residues 32–285 (IYIYDTTLRD…DLGLNLEVLP (254 aa)) form the Pyruvate carboxyltransferase domain.

This sequence belongs to the alpha-IPM synthase/homocitrate synthase family.

The enzyme catalyses acetyl-CoA + 2-oxoglutarate + H2O = (2R)-homocitrate + CoA + H(+). It carries out the reaction 2-oxoadipate + acetyl-CoA + H2O = (R)-dihomocitrate + CoA + H(+). It catalyses the reaction 2-oxoheptanedioate + acetyl-CoA + H2O = (R)-trihomocitrate + CoA + H(+). The protein operates within organic acid metabolism; 2-oxosuberate biosynthesis. In terms of biological role, catalyzes the condensation of alpha-ketoglutarate and acetyl-CoA to form (R)-homocitrate. Can also catalyze the condensation of alpha-ketoadipate with acetyl-CoA to form (R)-homo(2)citrate, and the condensation of alpha-ketopimelate with acetyl-CoA to form (R)-homo(3)citrate. These reactions are part of the biosynthesis pathway of coenzyme B and biotin. This Methanocaldococcus jannaschii (strain ATCC 43067 / DSM 2661 / JAL-1 / JCM 10045 / NBRC 100440) (Methanococcus jannaschii) protein is Homocitrate synthase AksA (aksA).